The chain runs to 249 residues: Proteasome subunit alpha type-7-B (249 aa).

The protein belongs to the peptidase T1A family. In terms of assembly, the 26S proteasome consists of a 20S proteasome core and two 19S regulatory subunits. The 20S proteasome core is composed of 28 subunits that are arranged in four stacked rings, resulting in a barrel-shaped structure. The two end rings are each formed by seven alpha subunits, and the two central rings are each formed by seven beta subunits. The catalytic chamber with the active sites is on the inside of the barrel.

The protein localises to the cytoplasm. It is found in the nucleus. Functionally, the proteasome is a multicatalytic proteinase complex which is characterized by its ability to cleave peptides with Arg, Phe, Tyr, Leu, and Glu adjacent to the leaving group at neutral or slightly basic pH. The proteasome has an ATP-dependent proteolytic activity. The polypeptide is Proteasome subunit alpha type-7-B (PAD1) (Oryza sativa subsp. indica (Rice)).